A 353-amino-acid chain; its full sequence is Terpene synthase 3 (353 aa).

Residues Asp118, Asn261, and Glu269 each coordinate Mg(2+). The D(D/E)XX(D/E) motif motif lies at Asp118–Glu122. The short motif at Asn261–Glu269 is the NSE motif element. The WxxxxxRY motif signature appears at Trp342 to Tyr349.

It belongs to the terpene synthase family. Requires Mg(2+) as cofactor.

Functionally, terpene synthase that may be involved in the production of volatile terpenoids. Does not show detectable terpene products with either farnesyl diphosphate (FPP) or geranyl diphosphate (GPP). P.polycephalum has a unique biology and these volatile terpenoids could function in internal communication of P.polycephalum, to mark the territory that have been explored, or they may be involved in chemotaxis. The polypeptide is Terpene synthase 3 (Physarum polycephalum (Slime mold)).